The sequence spans 227 residues: MSTNLCPNASSSDIQPILYSYWRSSCSWRVRIAMNLKEIPYDIKPISLIKSGGEQHCNEYREVNPMEQVPALQIDGHTLIESVAIMHYLEETRPQRPLLPQDVHKRAKVREIVEIICSGIQPLQNLIVLIHVGEEKKKEWAQHWITRGFRAVEKALSTSAGKYCVGDEISMADCCLVPQVFNARRFHVDLRPYPIILRIDRELESNPAFRAAHPSNQPDCPPELPNK.

One can recognise a GST N-terminal domain in the interval 14–97 (IQPILYSYWR…YLEETRPQRP (84 aa)). Residues 24-29 (SSCSWR), Gln-55, Val-69, 81-82 (ES), Gln-121, and 125-127 (NLI) contribute to the glutathione site. One can recognise a GST C-terminal domain in the interval 102-222 (DVHKRAKVRE…HPSNQPDCPP (121 aa)).

The protein belongs to the GST superfamily. Zeta family. The cofactor is glutathione.

Its subcellular location is the cytoplasm. The enzyme catalyses 4-maleylacetoacetate = 4-fumarylacetoacetate. It carries out the reaction RX + glutathione = an S-substituted glutathione + a halide anion + H(+). The protein operates within amino-acid degradation; L-phenylalanine degradation; acetoacetate and fumarate from L-phenylalanine: step 5/6. Catalyzes the glutathione dependent oxygenation of dichloroacetic acid to glyoxylic acid in vitro. Has no glutathione thioltransferase activity with 4-hydroxynonenal (4-HNE), adrenochrome, phenethyl isothiocyanate (PEITC), 5-hydroperoxyeicosatetraenoic acid ((5S)-HpETE), prostaglandin A2 (PGA2) or 2-hydroxyethyldisulfide (HED). In Drosophila melanogaster (Fruit fly), this protein is Probable maleylacetoacetate isomerase 2 (GstZ2).